Here is a 209-residue protein sequence, read N- to C-terminus: PF03932 family protein CutC (209 aa).

The protein belongs to the CutC family.

The protein resides in the cytoplasm. Might participate in the control of copper homeostasis; data from other bacteria suggests it is not involved. The protein is PF03932 family protein CutC of Enterococcus faecalis (strain ATCC 700802 / V583).